Here is an 83-residue protein sequence, read N- to C-terminus: Toxin To12 (83 aa).

Residues M1–A19 form the signal peptide. One can recognise an LCN-type CS-alpha/beta domain in the interval K20 to G82. 4 disulfides stabilise this stretch: C30-C81, C34-C57, C42-C62, and C46-C64. C81 carries the post-translational modification Cysteine amide.

Belongs to the long (4 C-C) scorpion toxin superfamily. Sodium channel inhibitor family. Beta subfamily. In terms of tissue distribution, expressed by the venom gland.

It localises to the secreted. Beta toxins bind voltage-independently at site-4 of sodium channels (Nav) and shift the voltage of activation toward more negative potentials thereby affecting sodium channel activation and promoting spontaneous and repetitive firing. The protein is Toxin To12 of Tityus obscurus (Amazonian scorpion).